The sequence spans 177 residues: Secretion monitor (177 aa).

The N-terminal stretch at 1 to 37 (MIGILNRWRQFGRRYFWPHLLLGMVAASLGVPLNLSG) is a signal peptide.

It belongs to the SecM family.

The protein resides in the cytoplasm. Its subcellular location is the cytosol. It is found in the periplasm. Its function is as follows. Regulates secA expression by translational coupling of the secM secA operon. Translational pausing at a specific Pro residue 5 residues before the end of the protein may allow disruption of a mRNA repressor helix that normally suppresses secA translation initiation. The protein is Secretion monitor of Yersinia pestis bv. Antiqua (strain Antiqua).